Consider the following 403-residue polypeptide: Imidazolonepropionase (403 aa).

2 residues coordinate Fe(3+): histidine 69 and histidine 71. Residues histidine 69 and histidine 71 each coordinate Zn(2+). Arginine 78, tyrosine 141, and histidine 174 together coordinate 4-imidazolone-5-propanoate. Tyrosine 141 provides a ligand contact to N-formimidoyl-L-glutamate. Histidine 239 provides a ligand contact to Fe(3+). A Zn(2+)-binding site is contributed by histidine 239. Glutamine 242 contributes to the 4-imidazolone-5-propanoate binding site. A Fe(3+)-binding site is contributed by aspartate 314. Aspartate 314 is a binding site for Zn(2+). Asparagine 316 and glycine 318 together coordinate N-formimidoyl-L-glutamate. Serine 319 provides a ligand contact to 4-imidazolone-5-propanoate.

This sequence belongs to the metallo-dependent hydrolases superfamily. HutI family. Zn(2+) serves as cofactor. It depends on Fe(3+) as a cofactor.

Its subcellular location is the cytoplasm. The catalysed reaction is 4-imidazolone-5-propanoate + H2O = N-formimidoyl-L-glutamate. It participates in amino-acid degradation; L-histidine degradation into L-glutamate; N-formimidoyl-L-glutamate from L-histidine: step 3/3. Catalyzes the hydrolytic cleavage of the carbon-nitrogen bond in imidazolone-5-propanoate to yield N-formimidoyl-L-glutamate. It is the third step in the universal histidine degradation pathway. The polypeptide is Imidazolonepropionase (Legionella pneumophila (strain Paris)).